The chain runs to 160 residues: Cytochrome b6-f complex subunit 4 (160 aa).

3 helical membrane passes run 36 to 56, 95 to 115, and 131 to 151; these read LLYMFPVVILGTIACNVGLAV, LLGVLLMAAVPAGLLTVPFIE, and TVFLIGTVVAIWLGIGATLPI.

This sequence belongs to the cytochrome b family. PetD subfamily. The 4 large subunits of the cytochrome b6-f complex are cytochrome b6, subunit IV (17 kDa polypeptide, petD), cytochrome f and the Rieske protein, while the 4 small subunits are petG, petL, petM and petN. The complex functions as a dimer.

Its subcellular location is the plastid. The protein resides in the chloroplast thylakoid membrane. Functionally, component of the cytochrome b6-f complex, which mediates electron transfer between photosystem II (PSII) and photosystem I (PSI), cyclic electron flow around PSI, and state transitions. The protein is Cytochrome b6-f complex subunit 4 of Coleochaete orbicularis (Charophycean green alga).